The primary structure comprises 368 residues: Microtubule-associated protein Jupiter (368 aa).

Residue Ser-30 is modified to Phosphoserine. A Phosphothreonine modification is found at Thr-41. Residues 81-93 (RRGQKSVDSHSRL) show a composition bias toward basic and acidic residues. The segment at 81–106 (RRGQKSVDSHSRLFGEPSRPITPGKN) is disordered. Position 102 is a phosphothreonine (Thr-102). A phosphoserine mark is found at Ser-111, Ser-146, and Ser-157. Composition is skewed to low complexity over residues 129–157 (NGNT…VSSS) and 238–248 (GRYGYSSQSRR). Disordered regions lie at residues 129–164 (NGNT…LKIN), 196–256 (SQGN…SPLN), and 316–368 (KPKK…SGLW). A compositionally biased stretch (polar residues) spans 337–354 (GSDSAQTPTMNGANQVIN).

The protein belongs to the MAP Jupiter family.

The protein resides in the nucleus. It is found in the cytoplasm. The protein localises to the cytoskeleton. It localises to the spindle. Functionally, binds to all microtubule populations. This is Microtubule-associated protein Jupiter from Drosophila willistoni (Fruit fly).